A 474-amino-acid polypeptide reads, in one-letter code: Siroheme synthase (474 aa).

The interval 1-203 (MKLFPLFADL…QRPEEAERLL (203 aa)) is precorrin-2 dehydrogenase /sirohydrochlorin ferrochelatase. NAD(+) contacts are provided by residues 22 to 23 (EI) and 43 to 44 (PA). Serine 128 is subject to Phosphoserine. The interval 216–474 (GSVVLVGAGP…QRPAPAALAA (259 aa)) is uroporphyrinogen-III C-methyltransferase. Proline 225 serves as a coordination point for S-adenosyl-L-methionine. The Proton acceptor role is filled by aspartate 248. Lysine 270 acts as the Proton donor in catalysis. S-adenosyl-L-methionine contacts are provided by residues 302–304 (GGD), isoleucine 307, 332–333 (TA), methionine 384, and glycine 413.

This sequence in the N-terminal section; belongs to the precorrin-2 dehydrogenase / sirohydrochlorin ferrochelatase family. It in the C-terminal section; belongs to the precorrin methyltransferase family.

It carries out the reaction uroporphyrinogen III + 2 S-adenosyl-L-methionine = precorrin-2 + 2 S-adenosyl-L-homocysteine + H(+). The catalysed reaction is precorrin-2 + NAD(+) = sirohydrochlorin + NADH + 2 H(+). It catalyses the reaction siroheme + 2 H(+) = sirohydrochlorin + Fe(2+). It participates in cofactor biosynthesis; adenosylcobalamin biosynthesis; precorrin-2 from uroporphyrinogen III: step 1/1. The protein operates within cofactor biosynthesis; adenosylcobalamin biosynthesis; sirohydrochlorin from precorrin-2: step 1/1. It functions in the pathway porphyrin-containing compound metabolism; siroheme biosynthesis; precorrin-2 from uroporphyrinogen III: step 1/1. Its pathway is porphyrin-containing compound metabolism; siroheme biosynthesis; siroheme from sirohydrochlorin: step 1/1. It participates in porphyrin-containing compound metabolism; siroheme biosynthesis; sirohydrochlorin from precorrin-2: step 1/1. Functionally, multifunctional enzyme that catalyzes the SAM-dependent methylations of uroporphyrinogen III at position C-2 and C-7 to form precorrin-2 via precorrin-1. Then it catalyzes the NAD-dependent ring dehydrogenation of precorrin-2 to yield sirohydrochlorin. Finally, it catalyzes the ferrochelation of sirohydrochlorin to yield siroheme. This Bordetella petrii (strain ATCC BAA-461 / DSM 12804 / CCUG 43448) protein is Siroheme synthase.